The chain runs to 481 residues: Cobyric acid synthase (481 aa).

A GATase cobBQ-type domain is found at 244–431 (VLRVVIPVLP…LHGLFDAPEA (188 aa)). Cys325 functions as the Nucleophile in the catalytic mechanism. His423 is an active-site residue.

The protein belongs to the CobB/CobQ family. CobQ subfamily.

It participates in cofactor biosynthesis; adenosylcobalamin biosynthesis. Its function is as follows. Catalyzes amidations at positions B, D, E, and G on adenosylcobyrinic A,C-diamide. NH(2) groups are provided by glutamine, and one molecule of ATP is hydrogenolyzed for each amidation. This chain is Cobyric acid synthase, found in Ralstonia nicotianae (strain ATCC BAA-1114 / GMI1000) (Ralstonia solanacearum).